Consider the following 639-residue polypeptide: ATP-dependent zinc metalloprotease FtsH (639 aa).

At 1–15 (MDNEKQASPPPAAPP) the chain is on the cytoplasmic side. The chain crosses the membrane as a helical span at residues 16-36 (LNWRYLLWIILLGIFLISWLG). At 37–123 (NAGRQAGDEI…VQAKSEEPSL (87 aa)) the chain is on the periplasmic side. Residues 124 to 144 (WMQAIIGILPWFLILGLIFYV) traverse the membrane as a helical segment. At 145–639 (SYRMQQRMMG…HNEAVATGAG (495 aa)) the chain is on the cytoplasmic side. 221–228 (GRPGTGKT) provides a ligand contact to ATP. A Zn(2+)-binding site is contributed by His442. Glu443 is a catalytic residue. Residues His446 and Asp518 each contribute to the Zn(2+) site.

The protein in the central section; belongs to the AAA ATPase family. It in the C-terminal section; belongs to the peptidase M41 family. Homohexamer. Requires Zn(2+) as cofactor.

The protein localises to the cell inner membrane. Its function is as follows. Acts as a processive, ATP-dependent zinc metallopeptidase for both cytoplasmic and membrane proteins. Plays a role in the quality control of integral membrane proteins. This chain is ATP-dependent zinc metalloprotease FtsH, found in Nitrosococcus oceani (strain ATCC 19707 / BCRC 17464 / JCM 30415 / NCIMB 11848 / C-107).